The sequence spans 162 residues: Transcription elongation factor GreA (162 aa).

The stretch at 46-77 (RENAEYKAAREEQTRLNNMVTRLQEEIERAQV) forms a coiled coil.

Belongs to the GreA/GreB family.

Functionally, necessary for efficient RNA polymerase transcription elongation past template-encoded arresting sites. The arresting sites in DNA have the property of trapping a certain fraction of elongating RNA polymerases that pass through, resulting in locked ternary complexes. Cleavage of the nascent transcript by cleavage factors such as GreA or GreB allows the resumption of elongation from the new 3'terminus. GreA releases sequences of 2 to 3 nucleotides. This Treponema pallidum (strain Nichols) protein is Transcription elongation factor GreA.